Reading from the N-terminus, the 144-residue chain is Augurin-B (144 aa).

The N-terminal stretch at 1-18 (MSLHSLCVPTILLISVLS) is a signal peptide. The propeptide occupies 19-68 (ICLSSGGSSDSKLHRILIKRDAKEIESRPKAYISVQQSKAKEFLSGLHRT). The disordered stretch occupies residues 109 to 144 (RSNDQGRQHHHDENAPMSQQDPRYNRHGANVNYDYY). Positions 112 to 122 (DQGRQHHHDEN) are enriched in basic and acidic residues.

This sequence belongs to the augurin family.

The protein localises to the secreted. It is found in the cytoplasm. It localises to the apical cell membrane. Probable hormone. Required for the proper formation of the central nervous system by attenuating cell proliferation during development. This chain is Augurin-B, found in Danio rerio (Zebrafish).